A 215-amino-acid chain; its full sequence is Recombination protein RecR (215 aa).

The C4-type zinc finger occupies 74–89; the sequence is CQRCGHLSADPICDIC. The region spanning 97 to 191 is the Toprim domain; the sequence is GVICVVADSR…RVTRIAYGLP (95 aa).

The protein belongs to the RecR family.

Its function is as follows. May play a role in DNA repair. It seems to be involved in an RecBC-independent recombinational process of DNA repair. It may act with RecF and RecO. The protein is Recombination protein RecR of Synechococcus sp. (strain RCC307).